The primary structure comprises 251 residues: Triosephosphate isomerase (251 aa).

Residue 9-11 (NWK) coordinates substrate. The active-site Electrophile is the H95. The active-site Proton acceptor is the E167. Substrate-binding positions include G173, S213, and 234–235 (GG).

The protein belongs to the triosephosphate isomerase family. As to quaternary structure, homodimer.

It is found in the cytoplasm. It carries out the reaction D-glyceraldehyde 3-phosphate = dihydroxyacetone phosphate. It functions in the pathway carbohydrate biosynthesis; gluconeogenesis. It participates in carbohydrate degradation; glycolysis; D-glyceraldehyde 3-phosphate from glycerone phosphate: step 1/1. Involved in the gluconeogenesis. Catalyzes stereospecifically the conversion of dihydroxyacetone phosphate (DHAP) to D-glyceraldehyde-3-phosphate (G3P). In Fusobacterium nucleatum subsp. nucleatum (strain ATCC 25586 / DSM 15643 / BCRC 10681 / CIP 101130 / JCM 8532 / KCTC 2640 / LMG 13131 / VPI 4355), this protein is Triosephosphate isomerase.